We begin with the raw amino-acid sequence, 31 residues long: Photosystem II reaction center protein T (31 aa).

The helical transmembrane segment at Ser-3 to Phe-23 threads the bilayer.

It belongs to the PsbT family. In terms of assembly, PSII is composed of 1 copy each of membrane proteins PsbA, PsbB, PsbC, PsbD, PsbE, PsbF, PsbH, PsbI, PsbJ, PsbK, PsbL, PsbM, PsbT, PsbX, PsbY, PsbZ, Psb30/Ycf12, peripheral proteins PsbO, CyanoQ (PsbQ), PsbU, PsbV and a large number of cofactors. It forms dimeric complexes.

The protein localises to the cellular thylakoid membrane. Its function is as follows. Found at the monomer-monomer interface of the photosystem II (PS II) dimer, plays a role in assembly and dimerization of PSII. PSII is a light-driven water plastoquinone oxidoreductase, using light energy to abstract electrons from H(2)O, generating a proton gradient subsequently used for ATP formation. This chain is Photosystem II reaction center protein T, found in Synechococcus elongatus (strain ATCC 33912 / PCC 7942 / FACHB-805) (Anacystis nidulans R2).